The following is a 218-amino-acid chain: Thiamine-phosphate synthase (218 aa).

4-amino-2-methyl-5-(diphosphooxymethyl)pyrimidine-binding positions include 43 to 47 (QFRDK) and asparagine 78. The Mg(2+) site is built by aspartate 79 and aspartate 98. Serine 117 provides a ligand contact to 4-amino-2-methyl-5-(diphosphooxymethyl)pyrimidine. Residue 143–145 (TNS) coordinates 2-[(2R,5Z)-2-carboxy-4-methylthiazol-5(2H)-ylidene]ethyl phosphate. Lysine 146 provides a ligand contact to 4-amino-2-methyl-5-(diphosphooxymethyl)pyrimidine. Residues glycine 174 and 194–195 (IS) each bind 2-[(2R,5Z)-2-carboxy-4-methylthiazol-5(2H)-ylidene]ethyl phosphate.

This sequence belongs to the thiamine-phosphate synthase family. Mg(2+) serves as cofactor.

The catalysed reaction is 2-[(2R,5Z)-2-carboxy-4-methylthiazol-5(2H)-ylidene]ethyl phosphate + 4-amino-2-methyl-5-(diphosphooxymethyl)pyrimidine + 2 H(+) = thiamine phosphate + CO2 + diphosphate. It carries out the reaction 2-(2-carboxy-4-methylthiazol-5-yl)ethyl phosphate + 4-amino-2-methyl-5-(diphosphooxymethyl)pyrimidine + 2 H(+) = thiamine phosphate + CO2 + diphosphate. It catalyses the reaction 4-methyl-5-(2-phosphooxyethyl)-thiazole + 4-amino-2-methyl-5-(diphosphooxymethyl)pyrimidine + H(+) = thiamine phosphate + diphosphate. The protein operates within cofactor biosynthesis; thiamine diphosphate biosynthesis; thiamine phosphate from 4-amino-2-methyl-5-diphosphomethylpyrimidine and 4-methyl-5-(2-phosphoethyl)-thiazole: step 1/1. Its function is as follows. Condenses 4-methyl-5-(beta-hydroxyethyl)thiazole monophosphate (THZ-P) and 2-methyl-4-amino-5-hydroxymethyl pyrimidine pyrophosphate (HMP-PP) to form thiamine monophosphate (TMP). This Lactococcus lactis subsp. cremoris (strain MG1363) protein is Thiamine-phosphate synthase.